Consider the following 291-residue polypeptide: Urease accessory protein UreD (291 aa).

This sequence belongs to the UreD family. UreD, UreF and UreG form a complex that acts as a GTP-hydrolysis-dependent molecular chaperone, activating the urease apoprotein by helping to assemble the nickel containing metallocenter of UreC. The UreE protein probably delivers the nickel.

The protein localises to the cytoplasm. Functionally, required for maturation of urease via the functional incorporation of the urease nickel metallocenter. The sequence is that of Urease accessory protein UreD from Acinetobacter baumannii (strain ATCC 17978 / DSM 105126 / CIP 53.77 / LMG 1025 / NCDC KC755 / 5377).